Reading from the N-terminus, the 103-residue chain is Sec-independent protein translocase protein TatA (103 aa).

A helical membrane pass occupies residues 1-21; that stretch reads MGNIFSPTHLIIILLLILLLF. A disordered region spans residues 48 to 103; it reads EESIEDKVEMADTSQVINEESQQSQPLSVKRAAIRRKASSDSKGGKASIAKKQRVK. The span at 59–74 shows a compositional bias: polar residues; the sequence is DTSQVINEESQQSQPL.

The protein belongs to the TatA/E family. As to quaternary structure, the Tat system comprises two distinct complexes: a TatABC complex, containing multiple copies of TatA, TatB and TatC subunits, and a separate TatA complex, containing only TatA subunits. Substrates initially bind to the TatABC complex, which probably triggers association of the separate TatA complex to form the active translocon.

The protein localises to the cell inner membrane. Part of the twin-arginine translocation (Tat) system that transports large folded proteins containing a characteristic twin-arginine motif in their signal peptide across membranes. TatA could form the protein-conducting channel of the Tat system. The sequence is that of Sec-independent protein translocase protein TatA from Bartonella tribocorum (strain CIP 105476 / IBS 506).